The primary structure comprises 130 residues: Small ribosomal subunit protein uS8 (130 aa).

This sequence belongs to the universal ribosomal protein uS8 family. Part of the 30S ribosomal subunit.

Functionally, one of the primary rRNA binding proteins, it binds directly to 16S rRNA central domain where it helps coordinate assembly of the platform of the 30S subunit. This is Small ribosomal subunit protein uS8 from Methanocella arvoryzae (strain DSM 22066 / NBRC 105507 / MRE50).